A 186-amino-acid chain; its full sequence is UPF0301 protein Swit_2673 (186 aa).

It belongs to the UPF0301 (AlgH) family.

The polypeptide is UPF0301 protein Swit_2673 (Rhizorhabdus wittichii (strain DSM 6014 / CCUG 31198 / JCM 15750 / NBRC 105917 / EY 4224 / RW1) (Sphingomonas wittichii)).